We begin with the raw amino-acid sequence, 360 residues long: MSDLATLETSILDQVAAAGDEAALEAVRVAALGKKGSISALLATLGKMSPDDRKTQGAAINQAKDKVTEALAARRDVLKSAALDARLASETIDVTLPLREAPTDAGRIHPLSQVWDELTTIFADMGFSVAEGPDIETDDYNFTKLNFPEGHPAREMHDTFFFHPKEDGSRMLLRTHTSPVQVRTMLSQKPPIRVICPGRTYRIDSDATHTPQFHQVEGLVIDKHSHLGHLKWILHEFCKAFFEVDHINMRFRPSFFPFTEPSLEVDIQCRRDKGEIRFGEGEDWLEILGCGMVHPNVLRACGIDPDEYQGFAWGMGIDRIAMLKYGIADLRQLFDSDVRWLSHYGFKPLEVPTLAGGLSS.

Glu260 provides a ligand contact to Mg(2+).

Belongs to the class-II aminoacyl-tRNA synthetase family. Phe-tRNA synthetase alpha subunit type 1 subfamily. In terms of assembly, tetramer of two alpha and two beta subunits. The cofactor is Mg(2+).

Its subcellular location is the cytoplasm. It carries out the reaction tRNA(Phe) + L-phenylalanine + ATP = L-phenylalanyl-tRNA(Phe) + AMP + diphosphate + H(+). The sequence is that of Phenylalanine--tRNA ligase alpha subunit from Bradyrhizobium diazoefficiens (strain JCM 10833 / BCRC 13528 / IAM 13628 / NBRC 14792 / USDA 110).